Here is a 254-residue protein sequence, read N- to C-terminus: C-X-C motif chemokine 16 (254 aa).

A signal peptide spans 1–29; sequence MGRDLRPGSRVLLLLLLLLLVYLTQPGNG. Residues 30–205 are Extracellular-facing; it reads NEGSVTGSCY…AGPTARTSAT (176 aa). The interval 32–107 is chemokine; it reads GSVTGSCYCG…DLKECGHAYS (76 aa). Intrachain disulfides connect C38/C68 and C40/C82. Positions 146-165 are disordered; sequence QSTQRPTLPVGSLSSDKELT. N168 is a glycosylation site (N-linked (GlcNAc...) asparagine). The disordered stretch occupies residues 178–200; the sequence is SLAAGPEAGENQKQPEKNAGPTA. Residues 206–226 form a helical membrane-spanning segment; the sequence is VPVLCLLAIIFILTAALSYVL. The Cytoplasmic segment spans residues 227–254; sequence CKRRRGQSPQSSPDLPVHYIPVAPDSNT. The disordered stretch occupies residues 231-254; sequence RGQSPQSSPDLPVHYIPVAPDSNT.

Belongs to the intercrine alpha (chemokine CxC) family. In terms of processing, glycosylated. Expressed in T-cell areas. Expressed in spleen, lymph nodes, lung, kidney, small intestine and thymus. Weak expression in heart and liver and no expression in brain and bone marrow.

Its subcellular location is the cell membrane. The protein resides in the secreted. Functionally, acts as a scavenger receptor on macrophages, which specifically binds to OxLDL (oxidized low density lipoprotein), suggesting that it may be involved in pathophysiology such as atherogenesis. Induces a strong chemotactic response. Induces calcium mobilization. Binds to CXCR6/Bonzo. In Homo sapiens (Human), this protein is C-X-C motif chemokine 16 (CXCL16).